We begin with the raw amino-acid sequence, 256 residues long: MAGHSKWANIKRQKERVDAKKGKTFAQLSRAIIVAAKHGIPDPAGNFQLRTAIEKAKAAGIPNDNIERAIAKGAGTYENDDTVYEEIRYEGYGVGGVAILIEAFTDNRNRTAADLRSAFNKNGGNLGETGCVSWMFEQKGVVRIEGNIDENALLEASMEGEADSYELYEEDDDQAAEVFTEMTNLDTLSQTLNDKNFNVTEVELRWIPNNLIYIENDEQAKSIIKLIEALESLDDVQNVTTNFEMADELMLLTVES.

It belongs to the TACO1 family.

It localises to the cytoplasm. This chain is Probable transcriptional regulatory protein cce_0894, found in Crocosphaera subtropica (strain ATCC 51142 / BH68) (Cyanothece sp. (strain ATCC 51142)).